Here is a 447-residue protein sequence, read N- to C-terminus: Trigger factor (447 aa).

In terms of domain architecture, PPIase FKBP-type spans 164–249; that stretch reads GDLVVIDFIG…VKEVKQAVVP (86 aa).

The protein belongs to the FKBP-type PPIase family. Tig subfamily.

Its subcellular location is the cytoplasm. It carries out the reaction [protein]-peptidylproline (omega=180) = [protein]-peptidylproline (omega=0). In terms of biological role, involved in protein export. Acts as a chaperone by maintaining the newly synthesized protein in an open conformation. Functions as a peptidyl-prolyl cis-trans isomerase. The chain is Trigger factor from Rhodospirillum rubrum (strain ATCC 11170 / ATH 1.1.1 / DSM 467 / LMG 4362 / NCIMB 8255 / S1).